We begin with the raw amino-acid sequence, 342 residues long: Platelet-activating factor receptor (342 aa).

Residues 1–16 lie on the Extracellular side of the membrane; sequence MEPHDSSHMDSEFRYT. A helical transmembrane segment spans residues 17 to 38; that stretch reads LFPIVYSIIFVLGVIANGYVLW. The Cytoplasmic portion of the chain corresponds to 39 to 54; the sequence is VFARLYPCKKFNEIKI. The helical transmembrane segment at 55-74 threads the bilayer; it reads FMVNLTMADMLFLITLPLWI. Over 75–91 the chain is Extracellular; the sequence is VYYQNQGNWILPKFLCN. A disulfide bridge links Cys90 with Cys173. The chain crosses the membrane as a helical span at residues 92-113; sequence VAGCLFFINTYCSVAFLGVITY. Residues 114–133 lie on the Cytoplasmic side of the membrane; that stretch reads NRFQAVTRPIKTAQANTRKR. Residues 134 to 155 form a helical membrane-spanning segment; that stretch reads GISLSLVIWVAIVGAASYFLIL. Topologically, residues 156–184 are extracellular; that stretch reads DSTNTVPDSAGSGNVTRCFEHYEKGSVPV. An N-linked (GlcNAc...) asparagine glycan is attached at Asn169. The chain crosses the membrane as a helical span at residues 185-205; that stretch reads LIIHIFIVFSFFLVFLIILFC. At 206 to 233 the chain is on the cytoplasmic side; it reads NLVIIRTLLMQPVQQQRNAEVKRRALWM. The helical transmembrane segment at 234–254 threads the bilayer; that stretch reads VCTVLAVFIICFVPHHVVQLP. The Extracellular portion of the chain corresponds to 255-276; the sequence is WTLAELGFQDSKFHQAINDAHQ. The chain crosses the membrane as a helical span at residues 277–296; sequence VTLCLLSTNCVLDPVIYCFL. Topologically, residues 297–342 are cytoplasmic; it reads TKKFRKHLTEKFYSMRSSRKCSRATTDTVTEVVVPFNQIPGNSLKN.

The protein belongs to the G-protein coupled receptor 1 family. Interacts with ARRB1. As to expression, expressed in the placenta, lung, left and right heart ventricles, heart atrium, leukocytes and differentiated HL-60 granulocytes.

Its subcellular location is the cell membrane. Functionally, receptor for platelet activating factor, a chemotactic phospholipid mediator that possesses potent inflammatory, smooth-muscle contractile and hypotensive activity. Seems to mediate its action via a G protein that activates a phosphatidylinositol-calcium second messenger system. The sequence is that of Platelet-activating factor receptor (PTAFR) from Homo sapiens (Human).